A 745-amino-acid chain; its full sequence is Phosphate transporter PHO1 homolog 4 (745 aa).

An SPX domain is found at 1-290 (MRFGKEFVSQ…KRNAAKLYME (290 aa)). Residues 1-342 (MRFGKEFVSQ…KINKERHLIT (342 aa)) are Cytoplasmic-facing. A helical transmembrane segment spans residues 343–363 (FSTGFFFGCGISLIVALGLII). The Extracellular segment spans residues 364-383 (HARNIMGTPGQRTYMETMFP). A helical membrane pass occupies residues 384–404 (LYRFFGFVVLHMDVYAANIYF). The Cytoplasmic portion of the chain corresponds to 405-427 (WRRYRVNYSFIFGFKQGTELGYR). A helical membrane pass occupies residues 428 to 448 (HVLLLSFGLGTLSLCAVLLNL). At 449 to 464 (DMEMDAQTKDYRLVTE) the chain is on the extracellular side. Residues 465-485 (LIPLFLLVLVIIIVLCPFNIL) form a helical membrane-spanning segment. The Cytoplasmic portion of the chain corresponds to 486 to 615 (YRSSRFFFLS…YTLNRGSNWN (130 aa)). In terms of domain architecture, EXS spans 550–744 (TSNIGFRTFY…NYEEDGDHHN (195 aa)). A helical membrane pass occupies residues 616 to 636 (ITAWVFSGVATFYGTYWDIVL). Over 637–660 (DWGLLQRGCKNSFLRDKLLVPHKT) the chain is Extracellular. The helical transmembrane segment at 661-681 (VYYAAMVLNVLLRLVWLQTVL) threads the bilayer. The Cytoplasmic segment spans residues 682-745 (DLKFSFLHRE…YEEDGDHHNN (64 aa)).

It belongs to the SYG1 (TC 2.A.94) family. As to expression, expressed in root epidermis and cortex, leaf hydathodes, pollen grains and stigma apex.

Its subcellular location is the cell membrane. In terms of biological role, may transport inorganic phosphate (Pi). The chain is Phosphate transporter PHO1 homolog 4 (PHO1-H4) from Arabidopsis thaliana (Mouse-ear cress).